The following is a 598-amino-acid chain: Aspartate--tRNA ligase (598 aa).

Glu-182 provides a ligand contact to L-aspartate. An aspartate region spans residues 206 to 209 (QLFK). Arg-228 lines the L-aspartate pocket. ATP contacts are provided by residues 228-230 (RDE) and Gln-237. His-456 is an L-aspartate binding site. ATP is bound at residue Glu-490. Position 497 (Arg-497) interacts with L-aspartate. 542–545 (GVDR) contacts ATP.

The protein belongs to the class-II aminoacyl-tRNA synthetase family. Type 1 subfamily. In terms of assembly, homodimer.

Its subcellular location is the cytoplasm. The catalysed reaction is tRNA(Asp) + L-aspartate + ATP = L-aspartyl-tRNA(Asp) + AMP + diphosphate. Catalyzes the attachment of L-aspartate to tRNA(Asp) in a two-step reaction: L-aspartate is first activated by ATP to form Asp-AMP and then transferred to the acceptor end of tRNA(Asp). This chain is Aspartate--tRNA ligase, found in Agathobacter rectalis (strain ATCC 33656 / DSM 3377 / JCM 17463 / KCTC 5835 / VPI 0990) (Eubacterium rectale).